Here is a 500-residue protein sequence, read N- to C-terminus: UPF0371 protein SZO_06760 (500 aa).

Belongs to the UPF0371 family.

The chain is UPF0371 protein SZO_06760 from Streptococcus equi subsp. zooepidemicus (strain H70).